We begin with the raw amino-acid sequence, 88 residues long: Alpha-conotoxin GVIIIB (88 aa).

The N-terminal stretch at 1-20 (MMSKMGAMFVLLLLFTLASS) is a signal peptide. Positions 21-43 (QQEGDVQARKTRPKSDFYRALPR) are excised as a propeptide. Thr87 carries the post-translational modification Threonine amide.

This sequence belongs to the conotoxin S superfamily. Post-translationally, contains 5 disulfide bonds. In terms of processing, the predominant peptide contains 2 hydroxyprolines, while 2 minor peptides contains 1 and 3 hydroxyprolines. In terms of tissue distribution, expressed by the venom duct.

The protein resides in the secreted. Alpha-conotoxins act on postsynaptic membranes, they bind to the nicotinic acetylcholine receptors (nAChR) and thus inhibit them. This toxin shows high activity on alpha-9-alpha-10 (CHRNA9-CHRNA10) (IC(50)=9.79 nM). It also shows weak activity on alpha-3-beta-2 (CHRNA3-CHRNB2) (IC(50)~1 uM), alpha-6/alpha-3-beta-2-beta-3 (CHRNA6/CHRNA3-CHRNB2-CHRNB3) (IC(50)~1 uM). The toxin binds to the same or overlapping binding sites than conotoxin RgIA (AC P0C1D0). This chain is Alpha-conotoxin GVIIIB, found in Conus geographus (Geography cone).